Here is a 464-residue protein sequence, read N- to C-terminus: Cytoplasmic tRNA 2-thiolation protein 2 (464 aa).

It belongs to the CTU2/NCS2 family.

Its subcellular location is the cytoplasm. The protein operates within tRNA modification; 5-methoxycarbonylmethyl-2-thiouridine-tRNA biosynthesis. Its function is as follows. Plays a central role in 2-thiolation of mcm(5)S(2)U at tRNA wobble positions of tRNA(Lys), tRNA(Glu) and tRNA(Gln). May act by forming a heterodimer with NCS6/CTU1 that ligates sulfur from thiocarboxylated URM1 onto the uridine of tRNAs at wobble position. This is Cytoplasmic tRNA 2-thiolation protein 2 from Oryza sativa subsp. indica (Rice).